The chain runs to 42 residues: Bacteriocin bavaricin-MN (42 aa).

An intrachain disulfide couples cysteine 10 to cysteine 15.

The protein belongs to the bacteriocin class IIA/YGNGV family.

It localises to the secreted. Functionally, has antimicrobial activity. This is Bacteriocin bavaricin-MN from Latilactobacillus sakei (Lactobacillus sakei).